The following is a 1083-amino-acid chain: Protein HOS4 (1083 aa).

Disordered regions lie at residues 1-233 and 267-328; these read MNET…RKLV and SSLF…YRDS. Phosphoserine occurs at positions 14 and 16. Over residues 24–62 the composition is skewed to basic and acidic residues; it reads TRREELEKISKQETSEEEDTAGKHEQRETLSEEVSDKFP. Position 37 is a phosphothreonine (threonine 37). Serine 67 is modified (phosphoserine). Residues 67-85 show a composition bias toward polar residues; it reads SFRSQTTSVHQATQNNLNA. The segment covering 86-118 has biased composition (basic and acidic residues); sequence KESEDLAHKNDASSHEGEVNGDSRPDDVPETNE. Residues 135 to 149 are compositionally biased toward polar residues; that stretch reads PNVRNVDIQNHQPFS. A compositionally biased stretch (basic and acidic residues) spans 151–166; it reads DQLRAMLKEPKRKTVD. Residues 167–185 show a composition bias toward acidic residues; it reads DFIEEEGLGAVEEEDLSDE. Positions 186 to 207 are enriched in basic and acidic residues; it reads VLEKNTTEPENVEKDIEYSDSD. The span at 277-293 shows a compositional bias: polar residues; it reads VKETNNNLSNMNSSPAQ. Serine 290 bears the Phosphoserine mark. The span at 300–310 shows a compositional bias: low complexity; the sequence is VSRSNDSNKSS. The segment covering 314 to 323 has biased composition (basic residues); sequence VSKRPKQKKG. ANK repeat units lie at residues 329–359, 363–392, and 398–427; these read GGRT…DIND, AGNT…DVNI, and FGDT…DPTI. The tract at residues 472 to 516 is disordered; sequence AGIHNDKSKNGNNAHTIDQPPFDNTTKAKNEKAADSPSMASNIDE. A compositionally biased stretch (polar residues) spans 481–496; sequence NGNNAHTIDQPPFDNT. Serine 507 carries the post-translational modification Phosphoserine. 2 ANK repeats span residues 532–561 and 593–622; these read AGKE…KIDL and NKTS…DPTK. Disordered stretches follow at residues 661–742 and 762–790; these read HSED…DDNE and DEEK…ISKI. The segment covering 665–675 has biased composition (acidic residues); it reads NNDDDDDDDNN. The residue at position 698 (serine 698) is a Phosphoserine. Position 700 is a phosphothreonine (threonine 700). Residues 721–740 are compositionally biased toward basic and acidic residues; sequence NNDRDVKESTTSDSRKRLDD. The residue at position 778 (serine 778) is a Phosphoserine.

Identified in the Set3C complex with HOS2, HST1, SNT1, SIF2, CPR1 and SET3.

In terms of biological role, unknown. Component of the Set3C complex, which is required to repress early/middle sporulation genes during meiosis. This Saccharomyces cerevisiae (strain ATCC 204508 / S288c) (Baker's yeast) protein is Protein HOS4 (HOS4).